The sequence spans 357 residues: Cobalt-precorrin-5B C(1)-methyltransferase (357 aa).

It belongs to the CbiD family.

The catalysed reaction is Co-precorrin-5B + S-adenosyl-L-methionine = Co-precorrin-6A + S-adenosyl-L-homocysteine. It participates in cofactor biosynthesis; adenosylcobalamin biosynthesis; cob(II)yrinate a,c-diamide from sirohydrochlorin (anaerobic route): step 6/10. Its function is as follows. Catalyzes the methylation of C-1 in cobalt-precorrin-5B to form cobalt-precorrin-6A. This chain is Cobalt-precorrin-5B C(1)-methyltransferase, found in Alkaliphilus oremlandii (strain OhILAs) (Clostridium oremlandii (strain OhILAs)).